The chain runs to 143 residues: MEYNNMMELKFLSKSQNESFARTVVAAFAAQLDPTIEEIADIKTAVSEAVTNCIIHAYENKIGIITIRAFILDNKITIEVIDEGKGIEDVEKAMQPLFTTRLEEERAGMGFTVMQTFMDELEVESTPGKGTLVRMTKYIGRNR.

Belongs to the anti-sigma-factor family.

The catalysed reaction is L-seryl-[protein] + ATP = O-phospho-L-seryl-[protein] + ADP + H(+). The enzyme catalyses L-threonyl-[protein] + ATP = O-phospho-L-threonyl-[protein] + ADP + H(+). Functionally, binds to sigma F and blocks its ability to form an RNA polymerase holoenzyme (E-sigma F). Phosphorylates SpoIIAA on a serine residue. This phosphorylation may enable SpoIIAA to act as an anti-anti-sigma factor that counteracts SpoIIAB and thus releases sigma F from inhibition. The polypeptide is Anti-sigma F factor (Caldanaerobacter subterraneus subsp. tengcongensis (strain DSM 15242 / JCM 11007 / NBRC 100824 / MB4) (Thermoanaerobacter tengcongensis)).